A 239-amino-acid polypeptide reads, in one-letter code: Protein canopy homolog 4 (239 aa).

The signal sequence occupies residues 1–20 (MGPVRLGTLLFILTVYGAWA). 3 disulfide bridges follow: C37-C195, C40-C183, and C93-C155. The segment at 199–239 (TWTGKEKITDGQEKTEEEEQDQEEEEMTNTPVHSQHDPEDL) is disordered. The span at 201-212 (TGKEKITDGQEK) shows a compositional bias: basic and acidic residues. The span at 213-225 (TEEEEQDQEEEEM) shows a compositional bias: acidic residues.

The protein belongs to the canopy family. As to quaternary structure, interacts with TLR4.

The protein resides in the secreted. In terms of biological role, plays a role in the regulation of the cell surface expression of TLR4. This Bos taurus (Bovine) protein is Protein canopy homolog 4 (CNPY4).